A 333-amino-acid polypeptide reads, in one-letter code: Chlorophyllide reductase 35.5 kDa chain (333 aa).

Residues 1–22 (MTDAPNLKGFDARLREEAAEEP) are disordered. ATP is bound by residues 45–50 (GSGKSF) and K74. Mg(2+) is bound at residue S49. C130 and C165 together coordinate [4Fe-4S] cluster. 219-220 (NK) lines the ATP pocket.

Belongs to the NifH/BchL/ChlL family. As to quaternary structure, homodimer. Chlorophyllide reductase is composed of three subunits; BchX, BchY and BchZ. [4Fe-4S] cluster is required as a cofactor.

The enzyme catalyses 3-deacetyl-3-vinylbacteriochlorophyllide a + 2 oxidized [2Fe-2S]-[ferredoxin] + ADP + phosphate = chlorophyllide a + 2 reduced [2Fe-2S]-[ferredoxin] + ATP + H2O + H(+). It carries out the reaction bacteriochlorophyllide a + 2 oxidized [2Fe-2S]-[ferredoxin] + ADP + phosphate = 3-acetyl-3-devinylchlorophyllide a + 2 reduced [2Fe-2S]-[ferredoxin] + ATP + H2O + H(+). It catalyses the reaction 3-deacetyl-3-(1-hydroxyethyl)bacteriochlorophyllide a + 2 oxidized [2Fe-2S]-[ferredoxin] + ADP + phosphate = 3-devinyl-3-(1-hydroxyethyl)chlorophyllide a + 2 reduced [2Fe-2S]-[ferredoxin] + ATP + H2O + H(+). The protein operates within porphyrin-containing compound metabolism; bacteriochlorophyll biosynthesis. Converts chlorophylls (Chl) into bacteriochlorophylls (BChl) by reducing ring B of the tetrapyrrole. In Rhodobacter capsulatus (strain ATCC BAA-309 / NBRC 16581 / SB1003), this protein is Chlorophyllide reductase 35.5 kDa chain (bchX).